We begin with the raw amino-acid sequence, 286 residues long: MTVIDEIYSSSSAIPTVALNDEAKKPVLGLGVAKLSDEETESSVLAALEAGCRLIDTAASYGNEAAVGRAIAASGIPREELFVTTKLGTSRQGFHSAQESCKESLDRLGLDYLDLYLIHWPAPTLGKYVESFEGMIEARERGHVRSIGVSNFTEDLLATVIEETNEVPAVNQVELHPRLNQAELRQVHAQHDVTTQSYSPLGVGRLIEEPTVTTIAAEYGRTPAQVLVRWNLQLDNVVVSRSSKPERVAENLDVFDFTLEPEHMEAIEGLHDGTRVLHDPMTFMGT.

The active-site Proton donor is Y61. NADPH contacts are provided by L201, V203, V239, R241, S242, R247, and N251.

It belongs to the aldo/keto reductase family.

This chain is Aldo-keto reductase MAP_4149, found in Mycolicibacterium paratuberculosis (strain ATCC BAA-968 / K-10) (Mycobacterium paratuberculosis).